A 302-amino-acid chain; its full sequence is Sulfate adenylyltransferase subunit 2 (302 aa).

Belongs to the PAPS reductase family. CysD subfamily. As to quaternary structure, heterodimer composed of CysD, the smaller subunit, and CysN.

It catalyses the reaction sulfate + ATP + H(+) = adenosine 5'-phosphosulfate + diphosphate. The protein operates within sulfur metabolism; hydrogen sulfide biosynthesis; sulfite from sulfate: step 1/3. Its function is as follows. With CysN forms the ATP sulfurylase (ATPS) that catalyzes the adenylation of sulfate producing adenosine 5'-phosphosulfate (APS) and diphosphate, the first enzymatic step in sulfur assimilation pathway. APS synthesis involves the formation of a high-energy phosphoric-sulfuric acid anhydride bond driven by GTP hydrolysis by CysN coupled to ATP hydrolysis by CysD. The polypeptide is Sulfate adenylyltransferase subunit 2 (Buchnera aphidicola subsp. Acyrthosiphon pisum (strain 5A)).